The following is a 422-amino-acid chain: UDP-N-acetylglucosamine 1-carboxyvinyltransferase (422 aa).

Phosphoenolpyruvate is bound at residue 23-24 (KN). Residue arginine 92 coordinates UDP-N-acetyl-alpha-D-glucosamine. Catalysis depends on cysteine 116, which acts as the Proton donor. Cysteine 116 carries the 2-(S-cysteinyl)pyruvic acid O-phosphothioketal modification. UDP-N-acetyl-alpha-D-glucosamine-binding positions include 121-125 (RPVDL), 161-164 (KVSV), aspartate 306, and isoleucine 328.

Belongs to the EPSP synthase family. MurA subfamily.

It localises to the cytoplasm. It carries out the reaction phosphoenolpyruvate + UDP-N-acetyl-alpha-D-glucosamine = UDP-N-acetyl-3-O-(1-carboxyvinyl)-alpha-D-glucosamine + phosphate. The protein operates within cell wall biogenesis; peptidoglycan biosynthesis. In terms of biological role, cell wall formation. Adds enolpyruvyl to UDP-N-acetylglucosamine. The polypeptide is UDP-N-acetylglucosamine 1-carboxyvinyltransferase (Aliivibrio fischeri (strain ATCC 700601 / ES114) (Vibrio fischeri)).